Here is a 437-residue protein sequence, read N- to C-terminus: Immunoglobulin superfamily member 11 (437 aa).

The first 22 residues, 1-22 (MTCRGSPLAPLLLFSLHGVAAS), serve as a signal peptide directing secretion. An Ig-like V-type domain is found at 23-136 (LEVSESPGSV…DRGGRNIGVT (114 aa)). At 23–241 (LEVSESPGSV…VISPQPRSIG (219 aa)) the chain is on the extracellular side. 2 disulfide bridges follow: Cys44–Cys120 and Cys165–Cys215. Residue Asn102 is glycosylated (N-linked (GlcNAc...) asparagine). Residues 144 to 234 (PSAPHCQIQG…TCLLDLQVIS (91 aa)) enclose the Ig-like C2-type domain. A helical membrane pass occupies residues 242–262 (LIAGAIGTGAVIIIFCIALIL). Over 263-437 (GAFFYWRSKN…PAQSRAGSLV (175 aa)) the chain is Cytoplasmic. Residue Arg379 is modified to Omega-N-methylarginine. The segment at 382–405 (SLPAVSRSNGSVSRKARPPPVPSL) is disordered.

In terms of processing, N-glycosylated.

The protein resides in the cell membrane. In terms of biological role, functions as a cell adhesion molecule through homophilic interaction. Stimulates cell growth. The polypeptide is Immunoglobulin superfamily member 11 (IGSF11) (Bos taurus (Bovine)).